A 393-amino-acid polypeptide reads, in one-letter code: Formate-dependent phosphoribosylglycinamide formyltransferase (393 aa).

N(1)-(5-phospho-beta-D-ribosyl)glycinamide is bound by residues 15 to 16 (EL) and Glu75. Residues Arg107, Lys148, 153–158 (SSGKGQ), 188–191 (EEYI), and Glu196 each bind ATP. Residues 112-302 (NLAAEKLAIK…EFELHLRAIL (191 aa)) form the ATP-grasp domain. Mg(2+)-binding residues include Glu261 and Glu273. N(1)-(5-phospho-beta-D-ribosyl)glycinamide contacts are provided by residues Asp280, Lys350, and 357–358 (RR).

This sequence belongs to the PurK/PurT family. Homodimer.

The enzyme catalyses N(1)-(5-phospho-beta-D-ribosyl)glycinamide + formate + ATP = N(2)-formyl-N(1)-(5-phospho-beta-D-ribosyl)glycinamide + ADP + phosphate + H(+). It functions in the pathway purine metabolism; IMP biosynthesis via de novo pathway; N(2)-formyl-N(1)-(5-phospho-D-ribosyl)glycinamide from N(1)-(5-phospho-D-ribosyl)glycinamide (formate route): step 1/1. Its function is as follows. Involved in the de novo purine biosynthesis. Catalyzes the transfer of formate to 5-phospho-ribosyl-glycinamide (GAR), producing 5-phospho-ribosyl-N-formylglycinamide (FGAR). Formate is provided by PurU via hydrolysis of 10-formyl-tetrahydrofolate. The chain is Formate-dependent phosphoribosylglycinamide formyltransferase from Prochlorococcus marinus (strain SARG / CCMP1375 / SS120).